The following is a 199-amino-acid chain: Recombination protein RecR (199 aa).

Residues 58–73 (CKKCFNLTSEDECEIC) form a C4-type zinc finger. In terms of domain architecture, Toprim spans 81-175 (KLICVVAETK…KVTRIAYGLP (95 aa)).

This sequence belongs to the RecR family.

Functionally, may play a role in DNA repair. It seems to be involved in an RecBC-independent recombinational process of DNA repair. It may act with RecF and RecO. In Prochlorococcus marinus (strain MIT 9301), this protein is Recombination protein RecR.